We begin with the raw amino-acid sequence, 943 residues long: Leucine--tRNA ligase (943 aa).

Residues 36–46 (PYPSGSMHVGH) carry the 'HIGH' region motif. The 'KMSKS' region signature appears at 623 to 627 (KMSSS). Residues 910–943 (ASEVVIHTDPEEAPGPEDRKAGARPLRPGIWLEE) are disordered. Residues 915 to 930 (IHTDPEEAPGPEDRKA) are compositionally biased toward basic and acidic residues.

It belongs to the class-I aminoacyl-tRNA synthetase family.

It localises to the cytoplasm. It carries out the reaction tRNA(Leu) + L-leucine + ATP = L-leucyl-tRNA(Leu) + AMP + diphosphate. In Methanopyrus kandleri (strain AV19 / DSM 6324 / JCM 9639 / NBRC 100938), this protein is Leucine--tRNA ligase.